Here is a 318-residue protein sequence, read N- to C-terminus: NADH-quinone oxidoreductase subunit H 2 (318 aa).

The next 9 membrane-spanning stretches (helical) occupy residues 4 to 24, 77 to 97, 106 to 126, 146 to 166, 179 to 199, 214 to 234, 238 to 258, 262 to 282, and 293 to 313; these read LLIALFSLILLLALLGAAGVF, LAPALAAFPMLAGFGVVAFAP, VGVLFVMGMLALTVWALVLGA, LAYESFLGLSLMGCVLLAGSF, LWFILLQPLGAALFFLAGLAA, LVAGFMTEYSGMSFALFFLGE, ILLVAALFTTLFLGGWAGPIL, VWFGLKVAAISVVFVWLRAAL, and FAWKVALPLALLNLLVTAWIA.

Belongs to the complex I subunit 1 family. NDH-1 is composed of 14 different subunits. Subunits NuoA, H, J, K, L, M, N constitute the membrane sector of the complex.

The protein localises to the cell inner membrane. The enzyme catalyses a quinone + NADH + 5 H(+)(in) = a quinol + NAD(+) + 4 H(+)(out). NDH-1 shuttles electrons from NADH, via FMN and iron-sulfur (Fe-S) centers, to quinones in the respiratory chain. The immediate electron acceptor for the enzyme in this species is believed to be ubiquinone. Couples the redox reaction to proton translocation (for every two electrons transferred, four hydrogen ions are translocated across the cytoplasmic membrane), and thus conserves the redox energy in a proton gradient. This subunit may bind ubiquinone. The chain is NADH-quinone oxidoreductase subunit H 2 from Cereibacter sphaeroides (strain ATCC 17029 / ATH 2.4.9) (Rhodobacter sphaeroides).